The primary structure comprises 173 residues: uncharacterized protein (173 aa).

This is an uncharacterized protein from Mycobacterium tuberculosis (strain CDC 1551 / Oshkosh).